The sequence spans 491 residues: Serine/threonine-protein kinase 3 (491 aa).

An N-acetylmethionine modification is found at Met-1. Ser-15 carries the post-translational modification Phosphoserine; by PLK1. The Protein kinase domain maps to 27–278; sequence FDVLEKLGEG…ATQLLQHPFI (252 aa). ATP-binding positions include 33 to 41 and Lys-56; that span reads LGEGSYGSV. Thr-117 is subject to Phosphothreonine; by PKB/AKT1. Residue Asp-146 is the Proton acceptor of the active site. 2 residues coordinate Mg(2+): Asn-151 and Asp-164. Phosphothreonine; by autocatalysis occurs at positions 174 and 180. A coiled-coil region spans residues 287–328; it reads LRDLITEAMEIKAKRHEEQQRELEEEEENSDEDELDSHTMVK. A disordered region spans residues 301-327; the sequence is RHEEQQRELEEEEENSDEDELDSHTMV. The segment covering 309-321 has biased composition (acidic residues); the sequence is LEEEEENSDEDEL. The residue at position 316 (Ser-316) is a Phosphoserine. 2 positions are modified to phosphothreonine; by autocatalysis: Thr-336 and Thr-378. The segment at 370-392 is disordered; it reads EDEEEEDGTMKRNATSPQVQRPS. Positions 381–390 are enriched in polar residues; the sequence is RNATSPQVQR. Thr-384 bears the Phosphothreonine; by PKB/AKT1 mark. Phosphoserine occurs at positions 385 and 444. The region spanning 437 to 484 is the SARAH domain; it reads FDFLKNLSLEELQMRLKALDPMMEREIEELRQRYTAKRQPILDAMDAK. Residues 442–475 are a coiled coil; it reads NLSLEELQMRLKALDPMMEREIEELRQRYTAKRQ.

The protein belongs to the protein kinase superfamily. STE Ser/Thr protein kinase family. STE20 subfamily. As to quaternary structure, homodimer; mediated via the coiled-coil region. Interacts with NORE1, which inhibits autoactivation. Interacts with and stabilizes SAV1. Interacts with RAF1, which prevents dimerization and phosphorylation. Interacts with RASSF1. Interacts (via SARAH domain) with isoform 1 of NEK2. Interacts with ESR1 only in the presence of SAV1. Interacts with PKB/AKT1. Forms a tripartite complex with MOBKL1B and STK38. Interacts with RASSF2 (via SARAH domain). Interacts with DLG5 (via PDZ domain 3). Interacts with LATS1; this interaction is inhibited in the presence of DLG5. Interacts with MARK3 in the presence of DLG5. Interacts with RASSF5; this interaction inhibits STK3 autoactivation through heterodimerization. Interacts (when phosphorylated) with SLMAP (via FHA domain); the interaction associates STK3 with the STRIPAK complex. Mg(2+) serves as cofactor. In terms of processing, autophosphorylated on two residues Thr-174 and Thr-180, leading to activation. Phosphorylation at Thr-117 and Thr-384 by PKB/AKT1, leads to inhibition of its: cleavage, kinase activity, autophosphorylation at Thr-180, binding to RASSF1 and nuclear translocation, and increase in its binding to RAF1. Phosphorylated at Ser-15 by PLK1, leading to activation. When autophosphorylated at Thr-180, recruits STRIPAK complex and promotes PP2A-mediated dephosphorylation and inactivation of STK3. Post-translationally, proteolytically cleaved by caspase-3 during apoptosis. Proteolytic cleavage results in kinase activation and nuclear translocation of the truncated form (MST1/N). Ubiquitinated by TRIM69; leading to its redistribution to the perinuclear cytoskeleton, where it is phosphorylated by PLK1 and subsequently activated. Expressed at high levels in adult kidney, skeletal and placenta tissues and at very low levels in adult heart, lung and brain tissues.

It localises to the cytoplasm. The protein resides in the nucleus. It is found in the cytoskeleton. The protein localises to the microtubule organizing center. Its subcellular location is the centrosome. The enzyme catalyses L-seryl-[protein] + ATP = O-phospho-L-seryl-[protein] + ADP + H(+). The catalysed reaction is L-threonyl-[protein] + ATP = O-phospho-L-threonyl-[protein] + ADP + H(+). Inhibited by the C-terminal non-catalytic region. Activated by caspase-cleavage. Full activation also requires homodimerization and autophosphorylation of Thr-180, which are inhibited by the proto-oncogene product RAF1. Activated by RASSF1 which acts by preventing its dephosphorylation. When autophosphorylated at Thr-180, recruits STRIPAK complex and promotes PP2A-mediated dephosphorylation and inactivation of STK3. In terms of biological role, stress-activated, pro-apoptotic kinase which, following caspase-cleavage, enters the nucleus and induces chromatin condensation followed by internucleosomal DNA fragmentation. Key component of the Hippo signaling pathway which plays a pivotal role in organ size control and tumor suppression by restricting proliferation and promoting apoptosis. The core of this pathway is composed of a kinase cascade wherein STK3/MST2 and STK4/MST1, in complex with its regulatory protein SAV1, phosphorylates and activates LATS1/2 in complex with its regulatory protein MOB1, which in turn phosphorylates and inactivates YAP1 oncoprotein and WWTR1/TAZ. Phosphorylation of YAP1 by LATS2 inhibits its translocation into the nucleus to regulate cellular genes important for cell proliferation, cell death, and cell migration. STK3/MST2 and STK4/MST1 are required to repress proliferation of mature hepatocytes, to prevent activation of facultative adult liver stem cells (oval cells), and to inhibit tumor formation. Phosphorylates NKX2-1. Phosphorylates NEK2 and plays a role in centrosome disjunction by regulating the localization of NEK2 to centrosome, and its ability to phosphorylate CROCC and CEP250. In conjunction with SAV1, activates the transcriptional activity of ESR1 through the modulation of its phosphorylation. Positively regulates RAF1 activation via suppression of the inhibitory phosphorylation of RAF1 on 'Ser-259'. Phosphorylates MOBKL1A and RASSF2. Phosphorylates MOBKL1B on 'Thr-74'. Acts cooperatively with MOBKL1B to activate STK38. This Homo sapiens (Human) protein is Serine/threonine-protein kinase 3.